A 205-amino-acid chain; its full sequence is Ribosomal RNA small subunit methyltransferase G (205 aa).

S-adenosyl-L-methionine is bound by residues Gly-66, Phe-71, 119–120 (IE), and Arg-135.

The protein belongs to the methyltransferase superfamily. RNA methyltransferase RsmG family.

It is found in the cytoplasm. It carries out the reaction guanosine(527) in 16S rRNA + S-adenosyl-L-methionine = N(7)-methylguanosine(527) in 16S rRNA + S-adenosyl-L-homocysteine. Functionally, specifically methylates the N7 position of guanine in position 527 of 16S rRNA. In Rhizobium johnstonii (strain DSM 114642 / LMG 32736 / 3841) (Rhizobium leguminosarum bv. viciae), this protein is Ribosomal RNA small subunit methyltransferase G.